We begin with the raw amino-acid sequence, 1132 residues long: Protein CROWDED NUCLEI 1 (1132 aa).

The segment at 1–31 (MSTPLKVWQRWSTPTKATNPDSNGSSHGTGL) is disordered. The segment covering 10-28 (RWSTPTKATNPDSNGSSHG) has biased composition (polar residues). Residues 73–714 (LLIEKKEWSS…KKLKEQREQF (642 aa)) adopt a coiled-coil conformation. 2 consecutive short sequence motifs (nuclear localization signal) follow at residues 379–386 (EKREAEWK) and 693–700 (IRKDVDDL). Residues Ser-774 and Ser-803 each carry the phosphoserine modification. Basic and acidic residues predominate over residues 849-859 (AESETGTKEVE). Disordered stretches follow at residues 849 to 871 (AESETGTKEVEVTNVNSDGDQSD), 883 to 909 (SLSNLDVDGQSRMKGKGKARTRRTRSV), 924 to 1039 (INLY…VQQE), and 1061 to 1132 (GVST…FLTT). Positions 861-871 (TNVNSDGDQSD) are enriched in polar residues. Phosphoserine occurs at positions 865 and 883. Residues 895–907 (MKGKGKARTRRTR) are compositionally biased toward basic residues. Ser-908 is subject to Phosphoserine. Phosphoserine occurs at positions 1093, 1105, and 1112. The segment covering 1095–1105 (DVNKTPLRADS) has biased composition (basic and acidic residues).

This sequence belongs to the CRWN family. Core component of the LINC complex which is composed of inner nuclear membrane SUN domain-containing proteins coupled to outer nuclear membrane WIP and WIT proteins. The LINC complex also involves nucleoskeletal proteins CRWN/LINC and possibly KAKU4 and the cytoskeletal myosin KAKU1. Interacts with SUN1 and SUN2. Binds to KAKU4. As to expression, expressed at low levels in roots, leaves, flowers and flower stalks.

The protein localises to the nucleus membrane. The protein resides in the nucleus. It is found in the nucleoplasm. Its subcellular location is the nucleus lamina. Its function is as follows. Component of SUN-protein-containing multivariate complexes also called LINC complexes which link the nucleoskeleton and cytoskeleton by providing versatile outer nuclear membrane attachment sites for cytoskeletal filaments. Required for nucleus structure organization (e.g. size and shape). This chain is Protein CROWDED NUCLEI 1, found in Arabidopsis thaliana (Mouse-ear cress).